Here is a 304-residue protein sequence, read N- to C-terminus: Acetyl-coenzyme A carboxylase carboxyl transferase subunit beta (304 aa).

The region spanning 23–292 (VWTKCDSCGQ…PNPEAPREGV (270 aa)) is the CoA carboxyltransferase N-terminal domain. Residues cysteine 27, cysteine 30, cysteine 46, and cysteine 49 each contribute to the Zn(2+) site. A C4-type zinc finger spans residues 27-49 (CDSCGQVLYRAELERNLEVCPKC). The segment at 285–304 (PEAPREGVVVPPVPDQEPEA) is disordered. The span at 295 to 304 (PPVPDQEPEA) shows a compositional bias: pro residues.

The protein belongs to the AccD/PCCB family. As to quaternary structure, acetyl-CoA carboxylase is a heterohexamer composed of biotin carboxyl carrier protein (AccB), biotin carboxylase (AccC) and two subunits each of ACCase subunit alpha (AccA) and ACCase subunit beta (AccD). The cofactor is Zn(2+).

The protein localises to the cytoplasm. The enzyme catalyses N(6)-carboxybiotinyl-L-lysyl-[protein] + acetyl-CoA = N(6)-biotinyl-L-lysyl-[protein] + malonyl-CoA. The protein operates within lipid metabolism; malonyl-CoA biosynthesis; malonyl-CoA from acetyl-CoA: step 1/1. Functionally, component of the acetyl coenzyme A carboxylase (ACC) complex. Biotin carboxylase (BC) catalyzes the carboxylation of biotin on its carrier protein (BCCP) and then the CO(2) group is transferred by the transcarboxylase to acetyl-CoA to form malonyl-CoA. The sequence is that of Acetyl-coenzyme A carboxylase carboxyl transferase subunit beta from Shigella sonnei (strain Ss046).